We begin with the raw amino-acid sequence, 316 residues long: Protoheme IX farnesyltransferase (316 aa).

The next 9 membrane-spanning stretches (helical) occupy residues 32–52 (VMSLVVFTAFAGLVLAPGHIH), 53–73 (PVLGLIAILCIAVGAGASGAL), 93–113 (IPAGRIAPSEALAFGLVLSGF), 116–136 (VILGLAVNWLSAGILAFTIFF), 152–172 (NIVIGGAAGAFPPMIGWACVT), 180–200 (TVLFLIIFLWTPAHFWALALF), 221–241 (VTKHQIVAYAVLTAVCGILPS), 252–271 (LVAAALGAIFIYCSIAVWRM), and 289–309 (IFYLFAVFSALMIDRLASIFV).

The protein belongs to the UbiA prenyltransferase family. Protoheme IX farnesyltransferase subfamily.

It is found in the cell inner membrane. It catalyses the reaction heme b + (2E,6E)-farnesyl diphosphate + H2O = Fe(II)-heme o + diphosphate. Its pathway is porphyrin-containing compound metabolism; heme O biosynthesis; heme O from protoheme: step 1/1. Converts heme B (protoheme IX) to heme O by substitution of the vinyl group on carbon 2 of heme B porphyrin ring with a hydroxyethyl farnesyl side group. This Rhizobium leguminosarum bv. trifolii (strain WSM2304) protein is Protoheme IX farnesyltransferase.